The sequence spans 67 residues: Small ribosomal subunit protein eS17 (67 aa).

Belongs to the eukaryotic ribosomal protein eS17 family.

This chain is Small ribosomal subunit protein eS17, found in Haloquadratum walsbyi (strain DSM 16790 / HBSQ001).